Reading from the N-terminus, the 361-residue chain is Inactive 2'-5'-oligoadenylate synthase 1D (361 aa).

Belongs to the 2-5A synthase family. In terms of assembly, interacts with OAS1A, the interaction inhibits OAS1A catalytic activity. As to expression, expressed specifically in oocytes (at protein level). Expressed at highest level in ovary with lesser amounts in intestine, brain, thymus lung, kidney, liver and uterus.

The protein localises to the cytoplasm. Does not have 2'-5'-oligoadenylate synthetase activity, but can bind double-stranded RNA. May play a role in the control of female fertility, possibly by binding to and inhibiting OAS1A. This is Inactive 2'-5'-oligoadenylate synthase 1D from Mus musculus (Mouse).